A 33-amino-acid polypeptide reads, in one-letter code: Photosystem II reaction center protein Psb30 (33 aa).

A helical membrane pass occupies residues 5–25 (VIAQLTVLTLMVVSGPLVIVL).

This sequence belongs to the Psb30/Ycf12 family. As to quaternary structure, PSII is composed of 1 copy each of membrane proteins PsbA, PsbB, PsbC, PsbD, PsbE, PsbF, PsbH, PsbI, PsbJ, PsbK, PsbL, PsbM, PsbT, PsbX, PsbY, PsbZ, Psb30/Ycf12, peripheral proteins of the oxygen-evolving complex and a large number of cofactors. It forms dimeric complexes.

The protein resides in the plastid. The protein localises to the chloroplast thylakoid membrane. A core subunit of photosystem II (PSII), probably helps stabilize the reaction center. The sequence is that of Photosystem II reaction center protein Psb30 from Pinus koraiensis (Korean pine).